The primary structure comprises 396 residues: uncharacterized protein (396 aa).

Helical transmembrane passes span 8-28 (TASG…ILAS), 44-64 (ISYV…ISGV), 73-93 (PLVV…PLSP), 97-117 (LAFV…AGTY), 133-153 (VLVK…ITFL), 158-178 (MFYG…IIYL), 213-233 (ALII…IWLP), 250-270 (LLSY…VLLN), 276-296 (VFIT…MLTV), 304-324 (ITAF…ITLM), 338-358 (IVAT…GLIA), and 363-383 (IAHI…AAAF).

It belongs to the major facilitator superfamily.

The protein localises to the cell membrane. This is an uncharacterized protein from Bacillus subtilis (strain 168).